A 295-amino-acid chain; its full sequence is Probable endonuclease 4 (295 aa).

Residues H78, H118, E154, D188, H191, H225, D238, H240, and E270 each coordinate Zn(2+).

Belongs to the AP endonuclease 2 family. Zn(2+) serves as cofactor.

It carries out the reaction Endonucleolytic cleavage to 5'-phosphooligonucleotide end-products.. Endonuclease IV plays a role in DNA repair. It cleaves phosphodiester bonds at apurinic or apyrimidinic (AP) sites, generating a 3'-hydroxyl group and a 5'-terminal sugar phosphate. The protein is Probable endonuclease 4 of Vibrio campbellii (strain ATCC BAA-1116).